Consider the following 257-residue polypeptide: Imidazole glycerol phosphate synthase subunit HisF (257 aa).

Catalysis depends on residues aspartate 11 and aspartate 130.

This sequence belongs to the HisA/HisF family. As to quaternary structure, heterodimer of HisH and HisF.

The protein resides in the cytoplasm. The catalysed reaction is 5-[(5-phospho-1-deoxy-D-ribulos-1-ylimino)methylamino]-1-(5-phospho-beta-D-ribosyl)imidazole-4-carboxamide + L-glutamine = D-erythro-1-(imidazol-4-yl)glycerol 3-phosphate + 5-amino-1-(5-phospho-beta-D-ribosyl)imidazole-4-carboxamide + L-glutamate + H(+). The protein operates within amino-acid biosynthesis; L-histidine biosynthesis; L-histidine from 5-phospho-alpha-D-ribose 1-diphosphate: step 5/9. Functionally, IGPS catalyzes the conversion of PRFAR and glutamine to IGP, AICAR and glutamate. The HisF subunit catalyzes the cyclization activity that produces IGP and AICAR from PRFAR using the ammonia provided by the HisH subunit. This is Imidazole glycerol phosphate synthase subunit HisF from Actinobacillus pleuropneumoniae serotype 7 (strain AP76).